The primary structure comprises 855 residues: Pentatricopeptide repeat-containing protein At1g74750 (855 aa).

Positions 21-40 (GSRPSAADGNSCTCAEDESG) are disordered. PPR repeat units lie at residues 358-392 (DGHT…GCKP), 393-427 (NTVT…GCEP), 428-462 (DRVT…GLSP), 463-497 (DTFT…GCTP), 498-532 (NLVT…GFQP), 533-567 (DKVT…NWVP), 568-602 (DEPV…GLRP), and 603-637 (NVPT…GLHP). Positions 755–838 (INLHVMSEGT…NSGCFVGSGE (84 aa)) constitute a Smr domain.

The protein belongs to the PPR family. P subfamily.

The chain is Pentatricopeptide repeat-containing protein At1g74750 from Arabidopsis thaliana (Mouse-ear cress).